We begin with the raw amino-acid sequence, 2325 residues long: Serine/threonine-protein kinase MEC1 (2325 aa).

One can recognise an FAT domain in the interval 1363 to 1886 (LLTTRSAECD…VWYIFSHARS (524 aa)). The PI3K/PI4K catalytic domain occupies 1993–2309 (FDDNVNIFFS…QVDVLIQEAT (317 aa)). Residues 1999–2005 (IFFSLQM) form a G-loop region. The interval 2174–2182 (GLGDRHCEN) is catalytic loop. The segment at 2194–2218 (HIDFDCLFEKGTTLPTPEIVPFRLT) is activation loop. The 33-residue stretch at 2293–2325 (LPMNIHGQVDVLIQEATSLERLSQMYAGWAAYM) folds into the FATC domain.

The protein belongs to the PI3/PI4-kinase family. ATM subfamily.

It localises to the nucleus. The catalysed reaction is L-seryl-[protein] + ATP = O-phospho-L-seryl-[protein] + ADP + H(+). It catalyses the reaction L-threonyl-[protein] + ATP = O-phospho-L-threonyl-[protein] + ADP + H(+). Functionally, serine/threonine protein kinase which activates checkpoint signaling upon genotoxic stresses such as ionizing radiation (IR), ultraviolet light (UV), or DNA replication stalling, thereby acting as a DNA damage sensor. Recognizes the substrate consensus sequence [ST]-Q. Recruited to DNA lesions in order to initiate the DNA repair by homologous recombination. Phosphorylates histone H2A to form H2AS128ph (gamma-H2A) at sites of DNA damage, also involved in the regulation of DNA damage response mechanism. Required for cell growth and meiotic recombination. The polypeptide is Serine/threonine-protein kinase MEC1 (MEC1) (Candida albicans (strain SC5314 / ATCC MYA-2876) (Yeast)).